The chain runs to 1198 residues: Structural polyprotein (1198 aa).

An interaction with host EXOC1 region spans residues 2–15 (TKKPGGPGKNRAIN). Residues 2-109 (TKKPGGPGKN…RKQNKRGGNE (108 aa)) lie on the Cytoplasmic side of the membrane. The tract at residues 37 to 72 (LLDGRGPVRFVLALITFFKFTALAPTKALLGRWKAV) is hydrophobic; homodimerization of capsid protein C. Residues 106–127 (GGNEGSIMWLASLAVVIAYAGA) constitute a propeptide, ER anchor for the capsid protein C, removed in mature form by serine protease NS3. A helical membrane pass occupies residues 110–130 (GSIMWLASLAVVIAYAGAMKL). The Extracellular portion of the chain corresponds to 131–253 (SNFQGKLLMT…ATRYLMKTEN (123 aa)). N142 carries an N-linked (GlcNAc...) asparagine; by host glycan. A helical membrane pass occupies residues 254–274 (WIIRNPGYAFLAATLGWMLGS). Over 275–279 (NNGQR) the chain is Cytoplasmic. A helical membrane pass occupies residues 280–294 (VVFTILLLLVAPAYS). Residues 295 to 746 (FNCLGMGNRD…QVFGGAFRTL (452 aa)) are Extracellular-facing. 6 disulfide bridges follow: C297-C324, C354-C410, C354-C415, C368-C399, C386-C410, and C386-C415. The interval 392–405 (DRGWGNGCGLFGKG) is fusion peptide. N448 carries N-linked (GlcNAc...) asparagine; by host glycosylation. 2 disulfides stabilise this stretch: C484/C581 and C598/C629. The chain crosses the membrane as a helical span at residues 747 to 767 (FGGMSWITQGLMGALLLWMGV). The Cytoplasmic portion of the chain corresponds to 768 to 773 (NARDRS). A helical transmembrane segment spans residues 774–794 (IALAFLATGGVLVFLATNVHA). Over 795–1198 (DTGCAIDITR…CADAWGHHLH (404 aa)) the chain is Extracellular. Intrachain disulfides connect C798-C809, C849-C937, C973-C1017, C1074-C1123, C1085-C1106, and C1107-C1110. 2 N-linked (GlcNAc...) asparagine; by host glycosylation sites follow: N924 and N1001. The tract at residues 1152 to 1177 (VDPFSAGPSGDVSGHPGGPSQEVDGQ) is disordered.

In terms of assembly, homodimer. Interacts (via N-terminus) with host EXOC1 (via C-terminus); this interaction results in EXOC1 degradation through the proteasome degradation pathway. Interacts with host CAPRIN1; this interaction is involved in the suppression of the integrated stress response. Forms heterodimers with envelope protein E in the endoplasmic reticulum and Golgi. As to quaternary structure, homodimer; in the endoplasmic reticulum and Golgi. Interacts with protein prM. Interacts with non-structural protein 1. Genome polyprotein: Specific enzymatic cleavages in vivo yield mature proteins. Cleavages in the lumen of endoplasmic reticulum are performed by host signal peptidase, whereas cleavages in the cytoplasmic side are performed by serine protease NS3. Signal cleavage at the 2K-4B site requires a prior NS3 protease-mediated cleavage at the 4A-2K site. Post-translationally, cleaved in post-Golgi vesicles by a host furin, releasing the mature small envelope protein M, and peptide pr. This cleavage is incomplete as up to 30% of viral particles still carry uncleaved prM. In terms of processing, N-glycosylated.

It localises to the secreted. It is found in the virion membrane. The protein resides in the host endoplasmic reticulum membrane. Functionally, plays a role in virus budding by binding to the cell membrane and gathering the viral RNA into a nucleocapsid that forms the core of a mature virus particle. During virus entry, may induce genome penetration into the host cytoplasm after hemifusion induced by the surface proteins. Can migrate to the cell nucleus where it modulates host functions. Overcomes the anti-viral effects of host EXOC1 by sequestering and degrading the latter through the proteasome degradation pathway. Inhibits the integrated stress response (ISR) in the infected cell by binding to host CAPRIN1. In terms of biological role, inhibits RNA silencing by interfering with host Dicer. Prevents premature fusion activity of envelope proteins in trans-Golgi by binding to envelope protein E at pH6.0. After virion release in extracellular space, gets dissociated from E dimers. Its function is as follows. Acts as a chaperone for envelope protein E during intracellular virion assembly by masking and inactivating envelope protein E fusion peptide. prM is the only viral peptide matured by host furin in the trans-Golgi network probably to avoid catastrophic activation of the viral fusion activity in acidic Golgi compartment prior to virion release. prM-E cleavage is inefficient, and many virions are only partially matured. These uncleaved prM would play a role in immune evasion. Functionally, may play a role in virus budding. Exerts cytotoxic effects by activating a mitochondrial apoptotic pathway through M ectodomain. May display a viroporin activity. In terms of biological role, binds to host cell surface receptor and mediates fusion between viral and cellular membranes. Envelope protein is synthesized in the endoplasmic reticulum in the form of heterodimer with protein prM. They play a role in virion budding in the ER, and the newly formed immature particle is covered with 60 spikes composed of heterodimer between precursor prM and envelope protein E. The virion is transported to the Golgi apparatus where the low pH causes dissociation of PrM-E heterodimers and formation of E homodimers. prM-E cleavage is inefficient, and many virions are only partially matured. These uncleaved prM would play a role in immune evasion. May play a role in neuroinvasiveness. This Japanese encephalitis virus (strain Jaoars982) (JEV) protein is Structural polyprotein.